The chain runs to 484 residues: Mitogen-activated protein kinase SLT2/MPK1 (484 aa).

One can recognise a Protein kinase domain in the interval 23–318; that stretch reads FQLIKEIGHG…VDEALEHPYL (296 aa). Residues 29-37 and Lys54 each bind ATP; that span reads IGHGAYGIV. Asp153 acts as the Proton acceptor in catalysis. The residue at position 190 (Thr190) is a Phosphothreonine. A TXY motif is present at residues 190–192; the sequence is TEY. The residue at position 192 (Tyr192) is a Phosphotyrosine. Positions 383-392 are enriched in low complexity; the sequence is QQQQQQQQQP. Disordered stretches follow at residues 383-403 and 426-464; these read QQQQ…AAAS and IHSQ…PQND.

It belongs to the protein kinase superfamily. CMGC Ser/Thr protein kinase family. MAP kinase subfamily. As to quaternary structure, interacts with RLM1. Mg(2+) serves as cofactor. In terms of processing, dually phosphorylated on Thr-190 and Tyr-192, which activates the enzyme.

The enzyme catalyses L-seryl-[protein] + ATP = O-phospho-L-seryl-[protein] + ADP + H(+). The catalysed reaction is L-threonyl-[protein] + ATP = O-phospho-L-threonyl-[protein] + ADP + H(+). Activated by tyrosine and threonine phosphorylation by MKK1 and MKK2. Functionally, serine/threonine protein kinase involved in a signal transduction pathway that plays a role in yeast cell morphogenesis and cell growth. This pathway seems to start by SMP3; then involve the kinase PKC1 that may act the BCK1 kinase that then phosphorylates MKK1 and MKK2 which themselves phosphorylate the SLT2/MPK1 kinase which itself then phosphorylates and activates the transcription factor RLM1. Directly phosphorylates BCY1 upon TOR complex 1 (TORC1) inhibition. The polypeptide is Mitogen-activated protein kinase SLT2/MPK1 (SLT2) (Saccharomyces cerevisiae (strain ATCC 204508 / S288c) (Baker's yeast)).